We begin with the raw amino-acid sequence, 653 residues long: 1-deoxy-D-xylulose-5-phosphate synthase (653 aa).

Thiamine diphosphate contacts are provided by residues His-86 and 127–129; that span reads GHS. Asp-158 is a binding site for Mg(2+). Thiamine diphosphate contacts are provided by residues 159 to 160, Asn-187, and Phe-294; that span reads GA. Mg(2+) is bound at residue Asn-187. A compositionally biased stretch (basic and acidic residues) spans 309-324; it reads KLEKTTSEPPPKKEPR. The disordered stretch occupies residues 309–343; the sequence is KLEKTTSEPPPKKEPRSPNAATAEPEAQPKPQPKP. A thiamine diphosphate-binding site is contributed by Glu-395.

The protein belongs to the transketolase family. DXPS subfamily. As to quaternary structure, homodimer. It depends on Mg(2+) as a cofactor. The cofactor is thiamine diphosphate.

The enzyme catalyses D-glyceraldehyde 3-phosphate + pyruvate + H(+) = 1-deoxy-D-xylulose 5-phosphate + CO2. The protein operates within metabolic intermediate biosynthesis; 1-deoxy-D-xylulose 5-phosphate biosynthesis; 1-deoxy-D-xylulose 5-phosphate from D-glyceraldehyde 3-phosphate and pyruvate: step 1/1. Catalyzes the acyloin condensation reaction between C atoms 2 and 3 of pyruvate and glyceraldehyde 3-phosphate to yield 1-deoxy-D-xylulose-5-phosphate (DXP). This chain is 1-deoxy-D-xylulose-5-phosphate synthase, found in Chromohalobacter salexigens (strain ATCC BAA-138 / DSM 3043 / CIP 106854 / NCIMB 13768 / 1H11).